Reading from the N-terminus, the 276-residue chain is Large ribosomal subunit protein uL2 (276 aa).

Residues 212–276 form a disordered region; it reads NRHRGIRPQT…KLIISRKKHK (65 aa). Positions 257 to 276 are enriched in basic residues; it reads YKTRKKKASDKLIISRKKHK.

The protein belongs to the universal ribosomal protein uL2 family. In terms of assembly, part of the 50S ribosomal subunit. Forms a bridge to the 30S subunit in the 70S ribosome.

One of the primary rRNA binding proteins. Required for association of the 30S and 50S subunits to form the 70S ribosome, for tRNA binding and peptide bond formation. It has been suggested to have peptidyltransferase activity; this is somewhat controversial. Makes several contacts with the 16S rRNA in the 70S ribosome. This chain is Large ribosomal subunit protein uL2, found in Helicobacter acinonychis (strain Sheeba).